The sequence spans 158 residues: Transcription elongation factor GreA (158 aa).

Positions 48–75 (NSEYDSAKEDQAFVEGRIAQLEKMIRNA) form a coiled coil.

It belongs to the GreA/GreB family.

Its function is as follows. Necessary for efficient RNA polymerase transcription elongation past template-encoded arresting sites. The arresting sites in DNA have the property of trapping a certain fraction of elongating RNA polymerases that pass through, resulting in locked ternary complexes. Cleavage of the nascent transcript by cleavage factors such as GreA or GreB allows the resumption of elongation from the new 3'terminus. GreA releases sequences of 2 to 3 nucleotides. The chain is Transcription elongation factor GreA from Shouchella clausii (strain KSM-K16) (Alkalihalobacillus clausii).